We begin with the raw amino-acid sequence, 225 residues long: Pyridoxine/pyridoxamine 5'-phosphate oxidase (225 aa).

Substrate is bound by residues 9–12 and lysine 78; that span reads RVDY. FMN is bound by residues 73 to 78, 88 to 89, lysine 95, and glutamine 117; these read RTVLCK and YT. Tyrosine 135, arginine 139, and serine 143 together coordinate substrate. Residues 152–153 and tryptophan 198 each bind FMN; that span reads QS. Substrate is bound at residue 204-206; the sequence is RLH. Arginine 208 serves as a coordination point for FMN.

It belongs to the pyridoxamine 5'-phosphate oxidase family. In terms of assembly, homodimer. FMN is required as a cofactor.

The catalysed reaction is pyridoxamine 5'-phosphate + O2 + H2O = pyridoxal 5'-phosphate + H2O2 + NH4(+). It carries out the reaction pyridoxine 5'-phosphate + O2 = pyridoxal 5'-phosphate + H2O2. The protein operates within cofactor metabolism; pyridoxal 5'-phosphate salvage; pyridoxal 5'-phosphate from pyridoxamine 5'-phosphate: step 1/1. Its pathway is cofactor metabolism; pyridoxal 5'-phosphate salvage; pyridoxal 5'-phosphate from pyridoxine 5'-phosphate: step 1/1. In terms of biological role, catalyzes the oxidation of either pyridoxine 5'-phosphate (PNP) or pyridoxamine 5'-phosphate (PMP) into pyridoxal 5'-phosphate (PLP). The chain is Pyridoxine/pyridoxamine 5'-phosphate oxidase from Nocardia farcinica (strain IFM 10152).